Consider the following 156-residue polypeptide: ATP synthase subunit b (156 aa).

The chain crosses the membrane as a helical span at residues 7–29 (LFAQMVVFLVLAWFTMKFVWPPL).

The protein belongs to the ATPase B chain family. F-type ATPases have 2 components, F(1) - the catalytic core - and F(0) - the membrane proton channel. F(1) has five subunits: alpha(3), beta(3), gamma(1), delta(1), epsilon(1). F(0) has three main subunits: a(1), b(2) and c(10-14). The alpha and beta chains form an alternating ring which encloses part of the gamma chain. F(1) is attached to F(0) by a central stalk formed by the gamma and epsilon chains, while a peripheral stalk is formed by the delta and b chains.

The protein resides in the cell inner membrane. F(1)F(0) ATP synthase produces ATP from ADP in the presence of a proton or sodium gradient. F-type ATPases consist of two structural domains, F(1) containing the extramembraneous catalytic core and F(0) containing the membrane proton channel, linked together by a central stalk and a peripheral stalk. During catalysis, ATP synthesis in the catalytic domain of F(1) is coupled via a rotary mechanism of the central stalk subunits to proton translocation. Functionally, component of the F(0) channel, it forms part of the peripheral stalk, linking F(1) to F(0). The polypeptide is ATP synthase subunit b (Burkholderia multivorans (strain ATCC 17616 / 249)).